The sequence spans 470 residues: tRNA-2-methylthio-N(6)-dimethylallyladenosine synthase (470 aa).

The region spanning 1–116 is the MTTase N-terminal domain; it reads MTYTVRTYGC…LPALLRRSRH (116 aa). Residues Cys-10, Cys-45, Cys-79, Cys-153, Cys-157, and Cys-160 each contribute to the [4Fe-4S] cluster site. The Radical SAM core domain occupies 139–369; sequence RESNYSAWVS…LDLQNRIALE (231 aa). The TRAM domain maps to 372–439; the sequence is RKLIGKEVEL…PYHLIGDNAL (68 aa).

The protein belongs to the methylthiotransferase family. MiaB subfamily. In terms of assembly, monomer. It depends on [4Fe-4S] cluster as a cofactor.

The protein localises to the cytoplasm. The catalysed reaction is N(6)-dimethylallyladenosine(37) in tRNA + (sulfur carrier)-SH + AH2 + 2 S-adenosyl-L-methionine = 2-methylsulfanyl-N(6)-dimethylallyladenosine(37) in tRNA + (sulfur carrier)-H + 5'-deoxyadenosine + L-methionine + A + S-adenosyl-L-homocysteine + 2 H(+). Catalyzes the methylthiolation of N6-(dimethylallyl)adenosine (i(6)A), leading to the formation of 2-methylthio-N6-(dimethylallyl)adenosine (ms(2)i(6)A) at position 37 in tRNAs that read codons beginning with uridine. In Tropheryma whipplei (strain Twist) (Whipple's bacillus), this protein is tRNA-2-methylthio-N(6)-dimethylallyladenosine synthase.